Consider the following 213-residue polypeptide: Histidine biosynthesis bifunctional protein HisIE (213 aa).

The phosphoribosyl-AMP cyclohydrolase stretch occupies residues 1-114 (MLTTEKYQGL…FHPALTDFSF (114 aa)). The phosphoribosyl-ATP pyrophosphohydrolase stretch occupies residues 115-213 (LFQLENIISI…RVRSKLKKKH (99 aa)).

In the N-terminal section; belongs to the PRA-CH family. It in the C-terminal section; belongs to the PRA-PH family.

The protein resides in the cytoplasm. It carries out the reaction 1-(5-phospho-beta-D-ribosyl)-ATP + H2O = 1-(5-phospho-beta-D-ribosyl)-5'-AMP + diphosphate + H(+). It catalyses the reaction 1-(5-phospho-beta-D-ribosyl)-5'-AMP + H2O = 1-(5-phospho-beta-D-ribosyl)-5-[(5-phospho-beta-D-ribosylamino)methylideneamino]imidazole-4-carboxamide. It functions in the pathway amino-acid biosynthesis; L-histidine biosynthesis; L-histidine from 5-phospho-alpha-D-ribose 1-diphosphate: step 2/9. Its pathway is amino-acid biosynthesis; L-histidine biosynthesis; L-histidine from 5-phospho-alpha-D-ribose 1-diphosphate: step 3/9. This chain is Histidine biosynthesis bifunctional protein HisIE, found in Blochmanniella floridana.